Consider the following 385-residue polypeptide: Galactokinase (385 aa).

Substrate is bound at residue 34-37 (EHTD). Residue 124 to 130 (SAGLSSS) participates in ATP binding. Residues Ser-130 and Glu-162 each contribute to the Mg(2+) site. The active-site Proton acceptor is Asp-174. Residue Tyr-223 participates in substrate binding.

Belongs to the GHMP kinase family. GalK subfamily.

The protein resides in the cytoplasm. It catalyses the reaction alpha-D-galactose + ATP = alpha-D-galactose 1-phosphate + ADP + H(+). It functions in the pathway carbohydrate metabolism; galactose metabolism. Catalyzes the transfer of the gamma-phosphate of ATP to D-galactose to form alpha-D-galactose-1-phosphate (Gal-1-P). The sequence is that of Galactokinase from Pasteurella multocida (strain Pm70).